The following is a 154-amino-acid chain: Large ribosomal subunit protein uL30 (154 aa).

Belongs to the universal ribosomal protein uL30 family. As to quaternary structure, part of the 50S ribosomal subunit.

The polypeptide is Large ribosomal subunit protein uL30 (Methanoregula boonei (strain DSM 21154 / JCM 14090 / 6A8)).